Consider the following 467-residue polypeptide: Glutamate--tRNA ligase (467 aa).

Residues 9–19 carry the 'HIGH' region motif; sequence PSPTGNLHIGS. A 'KMSKS' region motif is present at residues 237–241; it reads KISKR. ATP is bound at residue lysine 240.

Belongs to the class-I aminoacyl-tRNA synthetase family. Glutamate--tRNA ligase type 1 subfamily. In terms of assembly, monomer.

The protein resides in the cytoplasm. The catalysed reaction is tRNA(Glu) + L-glutamate + ATP = L-glutamyl-tRNA(Glu) + AMP + diphosphate. Functionally, catalyzes the attachment of glutamate to tRNA(Glu) in a two-step reaction: glutamate is first activated by ATP to form Glu-AMP and then transferred to the acceptor end of tRNA(Glu). The protein is Glutamate--tRNA ligase of Buchnera aphidicola subsp. Acyrthosiphon pisum (strain APS) (Acyrthosiphon pisum symbiotic bacterium).